The following is a 130-amino-acid chain: Protein UL145 (130 aa).

Interacts with host DDB1; this interaction promotes STAT2 degradation.

Its function is as follows. Plays a role in the inhibition of host innate immunity by exploiting host DDB1-cullin RING ubiquitin ligases (CRLs). Mechanistically, recruits host DDB1 via a DCAF-like interaction motif to antagonize IFN signaling by STAT2 degradation. The sequence is that of Protein UL145 (UL145) from Homo sapiens (Human).